A 246-amino-acid polypeptide reads, in one-letter code: PARP-type zinc finger-containing protein C2A9.07c (246 aa).

Residues 8 to 99 form a PARP-type; degenerate zinc finger; the sequence is YRVELAKTGR…EKILRAFEQG (92 aa). Positions 103 to 126 are enriched in basic and acidic residues; it reads EEDEERCRKMASDASEEKDRKIEE. A disordered region spans residues 103–246; it reads EEDEERCRKM…ESGNEYSDSD (144 aa). Phosphothreonine is present on threonine 130. At serine 131 the chain carries Phosphoserine. The span at 157–168 shows a compositional bias: basic residues; it reads NKKHKAERKRSP. A compositionally biased stretch (acidic residues) spans 175 to 184; the sequence is LEDDEEIEDV. The segment covering 185 to 196 has biased composition (basic and acidic residues); the sequence is ASDKDEEEKPWS. Acidic residues predominate over residues 197–215; it reads GDEEDDDELVVKDSEDETE. A phosphoserine mark is found at serine 243 and serine 245.

Its subcellular location is the nucleus. The protein resides in the mitochondrion. The polypeptide is PARP-type zinc finger-containing protein C2A9.07c (Schizosaccharomyces pombe (strain 972 / ATCC 24843) (Fission yeast)).